An 858-amino-acid chain; its full sequence is Neural cell adhesion molecule 1 (858 aa).

An N-terminal signal peptide occupies residues 1 to 19; it reads MLRTKDLIWTLFFLGTAVS. 5 consecutive Ig-like C2-type domains span residues 20–111, 116–205, 212–302, 309–414, and 417–502; these read LQVD…ATVN, QKLM…KDIQ, PTVQ…ASIH, PKIT…LEVQ, and PKLQ…ESLE. Topologically, residues 20–721 are extracellular; the sequence is LQVDIVPSQG…NGSPTAGLST (702 aa). 2 disulfide bridges follow: Cys-41/Cys-96 and Cys-139/Cys-189. Heparin contacts are provided by residues 152–156 and 161–165; these read KHKGR and KKDVR. The N-linked (GlcNAc...) asparagine glycan is linked to Asn-222. Cys-235 and Cys-288 form a disulfide bridge. N-linked (GlcNAc...) asparagine glycans are attached at residues Asn-316, Asn-348, Asn-434, Asn-460, and Asn-489. Cys-330 and Cys-396 are joined by a disulfide. Cys-437 and Cys-490 are disulfide-bonded. 2 consecutive Fibronectin type-III domains span residues 510–609 and 611–706; these read TPSS…TQPV and EPSA…SAQP. The helical transmembrane segment at 722 to 739 threads the bilayer; it reads GAIVGILIVIFVLLLVVM. At 740 to 858 the chain is on the cytoplasmic side; that stretch reads DITCYFLNKC…TQTKENESKA (119 aa). A disordered region spans residues 765-858; that stretch reads PGAKGKDMEE…TQTKENESKA (94 aa). Basic and acidic residues-rich tracts occupy residues 768–809 and 817–834; these read KGKD…HTEP and EPEK…ESEA. Ser-780 and Ser-784 each carry phosphoserine.

As to quaternary structure, interacts with MDK. Found in a complex with SLC39A6, SLC39A10 and with NCAM1; this complex controls NCAM1 phosphorylation and integration into focal adhesion complexes during epithelial-tomesenchymal transition. Interacts with synaptic plasticity regulator PANTS. In terms of processing, polysialylated by ST8SIA2 and ST8SIA4. Polysialylation modulates cell interactions by confering both attractive and repulsive properties that are highly regulated by ST8SIA2 and ST8SIA4. Polysialylation is formed on a-2,3-linked sialic acid of core glycans.

It localises to the cell membrane. In terms of biological role, this protein is a cell adhesion molecule involved in neuron-neuron adhesion, neurite fasciculation, outgrowth of neurites, etc. This is Neural cell adhesion molecule 1 from Rattus norvegicus (Rat).